We begin with the raw amino-acid sequence, 361 residues long: Ribosomal RNA large subunit methyltransferase M (361 aa).

Residues Ser186, 219 to 222 (CPGG), Asp238, Asp258, and Asp275 contribute to the S-adenosyl-L-methionine site. The Proton acceptor role is filled by Lys304.

This sequence belongs to the class I-like SAM-binding methyltransferase superfamily. RNA methyltransferase RlmE family. RlmM subfamily. As to quaternary structure, monomer.

The protein resides in the cytoplasm. The catalysed reaction is cytidine(2498) in 23S rRNA + S-adenosyl-L-methionine = 2'-O-methylcytidine(2498) in 23S rRNA + S-adenosyl-L-homocysteine + H(+). Catalyzes the 2'-O-methylation at nucleotide C2498 in 23S rRNA. The sequence is that of Ribosomal RNA large subunit methyltransferase M from Pseudoalteromonas translucida (strain TAC 125).